Reading from the N-terminus, the 236-residue chain is uncharacterized protein (236 aa).

Residues 1–26 (MTNTWNRLALLIFAVLSLLVAGELQA) form the signal peptide.

The protein belongs to the periplasmic pilus chaperone family.

It is found in the periplasm. In terms of biological role, part of the elfADCG-ycbUVF fimbrial operon, which promotes adhesion of bacteria to different abiotic surfaces. Could be required for the biogenesis of fimbriae. This is an uncharacterized protein from Escherichia coli (strain K12).